The chain runs to 229 residues: 7-cyano-7-deazaguanine synthase (229 aa).

8–18 (CSGGLDSSVIA) serves as a coordination point for ATP. Zn(2+)-binding residues include C190, C203, C206, and C209.

Belongs to the QueC family. Requires Zn(2+) as cofactor.

It carries out the reaction 7-carboxy-7-deazaguanine + NH4(+) + ATP = 7-cyano-7-deazaguanine + ADP + phosphate + H2O + H(+). It participates in purine metabolism; 7-cyano-7-deazaguanine biosynthesis. In terms of biological role, catalyzes the ATP-dependent conversion of 7-carboxy-7-deazaguanine (CDG) to 7-cyano-7-deazaguanine (preQ(0)). This chain is 7-cyano-7-deazaguanine synthase, found in Methanopyrus kandleri (strain AV19 / DSM 6324 / JCM 9639 / NBRC 100938).